The chain runs to 383 residues: tRNA-specific 2-thiouridylase MnmA (383 aa).

ATP is bound by residues 9 to 16 (GMSGGVDS) and Met-35. Residues 95–97 (NPD) form an interaction with target base in tRNA region. Cys-100 (nucleophile) is an active-site residue. Cys-100 and Cys-198 are disulfide-bonded. Gly-124 lines the ATP pocket. An interaction with tRNA region spans residues 148-150 (KDQ). Cys-198 acts as the Cysteine persulfide intermediate in catalysis. The tract at residues 310 to 311 (RY) is interaction with tRNA.

It belongs to the MnmA/TRMU family.

The protein localises to the cytoplasm. The enzyme catalyses S-sulfanyl-L-cysteinyl-[protein] + uridine(34) in tRNA + AH2 + ATP = 2-thiouridine(34) in tRNA + L-cysteinyl-[protein] + A + AMP + diphosphate + H(+). In terms of biological role, catalyzes the 2-thiolation of uridine at the wobble position (U34) of tRNA, leading to the formation of s(2)U34. The polypeptide is tRNA-specific 2-thiouridylase MnmA (Paraburkholderia phytofirmans (strain DSM 17436 / LMG 22146 / PsJN) (Burkholderia phytofirmans)).